The following is a 261-amino-acid chain: 3-hydroxyacyl-CoA dehydrogenase type-2 (261 aa).

Alanine 2 carries the post-translational modification N-acetylalanine. 3 residues coordinate NAD(+): serine 20, leucine 22, and aspartate 41. Lysine 53 is subject to N6-acetyllysine; alternate. Lysine 53 is subject to N6-succinyllysine; alternate. Aspartate 64 and valine 65 together coordinate NAD(+). Lysine 69 carries the N6-acetyllysine modification. Cysteine 91 is an NAD(+) binding site. 2 positions are modified to N6-acetyllysine: lysine 99 and lysine 105. Residue serine 155 participates in substrate binding. Tyrosine 168, lysine 172, phenylalanine 201, and threonine 203 together coordinate NAD(+). Tyrosine 168 functions as the Proton acceptor in the catalytic mechanism. Position 212 is an N6-acetyllysine; alternate (lysine 212). An N6-succinyllysine; alternate modification is found at lysine 212.

The protein belongs to the short-chain dehydrogenases/reductases (SDR) family. Homotetramer. Component of mitochondrial ribonuclease P, a complex composed of TRMT10C/MRPP1, HSD17B10/MRPP2 and PRORP/MRPP3. Interacts with TRMT10C/MRPP1; forming the MRPP1-MRPP2 subcomplex of the mitochondrial ribonuclease P complex. As to expression, ubiquitously expressed in normal tissues but is overexpressed in neurons affected in AD.

The protein resides in the mitochondrion. The protein localises to the mitochondrion matrix. It localises to the mitochondrion nucleoid. The catalysed reaction is a (3S)-3-hydroxyacyl-CoA + NAD(+) = a 3-oxoacyl-CoA + NADH + H(+). The enzyme catalyses (2S,3S)-3-hydroxy-2-methylbutanoyl-CoA + NAD(+) = 2-methyl-3-oxobutanoyl-CoA + NADH + H(+). It catalyses the reaction testosterone + NAD(+) = androst-4-ene-3,17-dione + NADH + H(+). It carries out the reaction 5alpha-androstane-3alpha,17beta-diol + NAD(+) = 17beta-hydroxy-5alpha-androstan-3-one + NADH + H(+). The catalysed reaction is 17beta-estradiol + NAD(+) = estrone + NADH + H(+). The enzyme catalyses cholate + NAD(+) = 3alpha,12alpha-dihydroxy-7-oxo-5beta-cholanate + NADH + H(+). It catalyses the reaction (3S)-3-hydroxybutanoyl-CoA + NAD(+) = acetoacetyl-CoA + NADH + H(+). It carries out the reaction (3S)-hydroxyoctanoyl-CoA + NAD(+) = 3-oxooctanoyl-CoA + NADH + H(+). The catalysed reaction is (3S)-hydroxyhexadecanoyl-CoA + NAD(+) = 3-oxohexadecanoyl-CoA + NADH + H(+). The enzyme catalyses 17beta-hydroxy-5alpha-androstan-3-one + NAD(+) = 5alpha-androstan-3,17-dione + NADH + H(+). It catalyses the reaction 5alpha-pregnan-20beta-ol-3-one + NAD(+) = 5alpha-pregnane-3,20-dione + NADH + H(+). It carries out the reaction 3alpha-hydroxy-5alpha-pregnan-20-one + NAD(+) = 5alpha-pregnane-3,20-dione + NADH + H(+). The catalysed reaction is cortisone + NAD(+) = 17alpha-hydroxypregn-4-en-3,11,20-trione-21-al + NADH + H(+). The enzyme catalyses 11-dehydrocorticosterone + NAD(+) = pregn-4-ene-3,11,20,21-tetraone + NADH + H(+). It catalyses the reaction cortisol + NAD(+) = 11beta,17alpha-dihydroxypregn-4-ene-3,20,21-trione + NADH + H(+). It carries out the reaction chenodeoxycholate + NAD(+) = 7-oxolithocholate + NADH + H(+). The catalysed reaction is ursodeoxycholate + NAD(+) = 7-oxolithocholate + NADH + H(+). The enzyme catalyses 3beta,7beta-dihydroxy-5beta-cholan-24-oate + NAD(+) = 3beta-hydroxy-7-oxo-5beta-cholan-24-oate + NADH + H(+). It participates in amino-acid degradation; L-isoleucine degradation. It functions in the pathway lipid metabolism; fatty acid beta-oxidation. Its pathway is steroid metabolism. The protein operates within lipid metabolism; bile acid biosynthesis. The phospholipase C-like activity toward cardiolipin is inhibited by amyloid-beta peptide. Mitochondrial dehydrogenase involved in pathways of fatty acid, branched-chain amino acid and steroid metabolism. Acts as (S)-3-hydroxyacyl-CoA dehydrogenase in mitochondrial fatty acid beta-oxidation, a major degradation pathway of fatty acids. Catalyzes the third step in the beta-oxidation cycle, namely the reversible conversion of (S)-3-hydroxyacyl-CoA to 3-ketoacyl-CoA. Preferentially accepts straight medium- and short-chain acyl-CoA substrates with highest efficiency for (3S)-hydroxybutanoyl-CoA. Acts as 3-hydroxy-2-methylbutyryl-CoA dehydrogenase in branched-chain amino acid catabolic pathway. Catalyzes the oxidation of 3-hydroxy-2-methylbutanoyl-CoA into 2-methyl-3-oxobutanoyl-CoA, a step in isoleucine degradation pathway. Has hydroxysteroid dehydrogenase activity toward steroid hormones and bile acids. Catalyzes the oxidation of 3alpha-, 17beta-, 20beta- and 21-hydroxysteroids and 7alpha- and 7beta-hydroxy bile acids. Oxidizes allopregnanolone/brexanolone at the 3alpha-hydroxyl group, which is known to be critical for the activation of gamma-aminobutyric acid receptors (GABAARs) chloride channel. Has phospholipase C-like activity toward cardiolipin and its oxidized species. Likely oxidizes the 2'-hydroxyl in the head group of cardiolipin to form a ketone intermediate that undergoes nucleophilic attack by water and fragments into diacylglycerol, dihydroxyacetone and orthophosphate. Has higher affinity for cardiolipin with oxidized fatty acids and may degrade these species during the oxidative stress response to protect cells from apoptosis. By interacting with intracellular amyloid-beta, it may contribute to the neuronal dysfunction associated with Alzheimer disease (AD). Essential for structural and functional integrity of mitochondria. Functionally, in addition to mitochondrial dehydrogenase activity, moonlights as a component of mitochondrial ribonuclease P, a complex that cleaves tRNA molecules in their 5'-ends. Together with TRMT10C/MRPP1, forms a subcomplex of the mitochondrial ribonuclease P, named MRPP1-MRPP2 subcomplex, which displays functions that are independent of the ribonuclease P activity. The MRPP1-MRPP2 subcomplex catalyzes the formation of N(1)-methylguanine and N(1)-methyladenine at position 9 (m1G9 and m1A9, respectively) in tRNAs; HSD17B10/MRPP2 acting as a non-catalytic subunit. The MRPP1-MRPP2 subcomplex also acts as a tRNA maturation platform: following 5'-end cleavage by the mitochondrial ribonuclease P complex, the MRPP1-MRPP2 subcomplex enhances the efficiency of 3'-processing catalyzed by ELAC2, retains the tRNA product after ELAC2 processing and presents the nascent tRNA to the mitochondrial CCA tRNA nucleotidyltransferase TRNT1 enzyme. Associates with mitochondrial DNA complexes at the nucleoids to initiate RNA processing and ribosome assembly. The polypeptide is 3-hydroxyacyl-CoA dehydrogenase type-2 (HSD17B10) (Homo sapiens (Human)).